Reading from the N-terminus, the 217-residue chain is Adenylate kinase (217 aa).

10–15 (GAGKGT) contacts ATP. The segment at 30–59 (STGDIFRAAMKNETPMGIEAKKYIDKGELV) is NMP. AMP contacts are provided by residues Thr-31, Arg-36, 57 to 59 (ELV), 85 to 88 (GFPR), and Gln-92. Residues 126 to 164 (GRFICRNCGATYHKLYNAPKVEGTCDVCGHHEFYQRDDD) form an LID region. Arg-127 serves as a coordination point for ATP. Residues Cys-130 and Cys-133 each coordinate Zn(2+). 136 to 137 (TY) contributes to the ATP binding site. Residues Cys-150 and Cys-153 each contribute to the Zn(2+) site. Residues Arg-161 and Arg-172 each contribute to the AMP site. Position 200 (Gln-200) interacts with ATP.

Belongs to the adenylate kinase family. Monomer.

It is found in the cytoplasm. The enzyme catalyses AMP + ATP = 2 ADP. Its pathway is purine metabolism; AMP biosynthesis via salvage pathway; AMP from ADP: step 1/1. Catalyzes the reversible transfer of the terminal phosphate group between ATP and AMP. Plays an important role in cellular energy homeostasis and in adenine nucleotide metabolism. This is Adenylate kinase from Limosilactobacillus reuteri subsp. reuteri (strain JCM 1112) (Lactobacillus reuteri).